A 285-amino-acid chain; its full sequence is (3S)-malyl-CoA thioesterase (285 aa).

Substrate contacts are provided by arginine 70 and glutamate 122. Residues glutamate 122 and aspartate 148 each contribute to the Mg(2+) site.

Belongs to the HpcH/HpaI aldolase family. As to quaternary structure, homodimer or homotrimer. It depends on Mg(2+) as a cofactor.

It carries out the reaction (S)-malyl-CoA + H2O = (S)-malate + CoA + H(+). Reversibly inhibited by EDTA. Stimulated by the divalent cations Mg(2+) and Mn(2+). Functionally, catalyzes the hydrolysis of (3S)-malyl-CoA to (3S)-malate and free CoA. Inactive towards beta-methylmalyl-CoA and other CoA esters. This is (3S)-malyl-CoA thioesterase from Cereibacter sphaeroides (strain ATCC 17023 / DSM 158 / JCM 6121 / CCUG 31486 / LMG 2827 / NBRC 12203 / NCIMB 8253 / ATH 2.4.1.) (Rhodobacter sphaeroides).